The sequence spans 321 residues: Biotin synthase (321 aa).

A Radical SAM core domain is found at 45 to 271; sequence FFGKKVKLNM…INPSKEIRIA (227 aa). Residues Cys-63, Cys-67, and Cys-70 each coordinate [4Fe-4S] cluster. Positions 106, 139, 199, and 269 each coordinate [2Fe-2S] cluster.

This sequence belongs to the radical SAM superfamily. Biotin synthase family. In terms of assembly, homodimer. [4Fe-4S] cluster is required as a cofactor. Requires [2Fe-2S] cluster as cofactor.

It catalyses the reaction (4R,5S)-dethiobiotin + (sulfur carrier)-SH + 2 reduced [2Fe-2S]-[ferredoxin] + 2 S-adenosyl-L-methionine = (sulfur carrier)-H + biotin + 2 5'-deoxyadenosine + 2 L-methionine + 2 oxidized [2Fe-2S]-[ferredoxin]. It participates in cofactor biosynthesis; biotin biosynthesis; biotin from 7,8-diaminononanoate: step 2/2. In terms of biological role, catalyzes the conversion of dethiobiotin (DTB) to biotin by the insertion of a sulfur atom into dethiobiotin via a radical-based mechanism. This chain is Biotin synthase, found in Staphylococcus haemolyticus (strain JCSC1435).